The primary structure comprises 177 residues: Alkyl hydroperoxide reductase AhpD (177 aa).

The active-site Proton donor is the cysteine 133. A disulfide bridge links cysteine 133 with cysteine 136. The active-site Cysteine sulfenic acid (-SOH) intermediate is the cysteine 136.

It belongs to the AhpD family.

It catalyses the reaction N(6)-[(R)-dihydrolipoyl]-L-lysyl-[lipoyl-carrier protein] + a hydroperoxide = N(6)-[(R)-lipoyl]-L-lysyl-[lipoyl-carrier protein] + an alcohol + H2O. Antioxidant protein with alkyl hydroperoxidase activity. Required for the reduction of the AhpC active site cysteine residues and for the regeneration of the AhpC enzyme activity. This chain is Alkyl hydroperoxide reductase AhpD, found in Coxiella burnetii (strain CbuG_Q212) (Coxiella burnetii (strain Q212)).